Here is a 213-residue protein sequence, read N- to C-terminus: Probable nicotinate-nucleotide adenylyltransferase (213 aa).

The protein belongs to the NadD family.

The catalysed reaction is nicotinate beta-D-ribonucleotide + ATP + H(+) = deamido-NAD(+) + diphosphate. It functions in the pathway cofactor biosynthesis; NAD(+) biosynthesis; deamido-NAD(+) from nicotinate D-ribonucleotide: step 1/1. Catalyzes the reversible adenylation of nicotinate mononucleotide (NaMN) to nicotinic acid adenine dinucleotide (NaAD). This is Probable nicotinate-nucleotide adenylyltransferase from Escherichia coli O139:H28 (strain E24377A / ETEC).